Consider the following 267-residue polypeptide: Serine/arginine-rich splicing factor 7 (267 aa).

Residues 40–113 (TKVYVGNLGT…SRVRVELSTG (74 aa)) form the RRM domain. Lys53 carries the post-translational modification N6-acetyllysine; alternate. Residue Lys53 forms a Glycyl lysine isopeptide (Lys-Gly) (interchain with G-Cter in SUMO2); alternate linkage. At Ser61 the chain carries Phosphoserine. A sufficient for interaction with NXF1 region spans residues 110–127 (LSTGMPRRSRFDRPPARR). The segment at 133-150 (DRCYECGEKGHYAYDCHR) adopts a CCHC-type zinc-finger fold. Positions 152 to 209 (SRRRRSRSRSRSHSRSRGRRYSRSRSRSRGRRSRSASPRRSRSVSLRRSRSASLRRSR) are enriched in basic residues. A disordered region spans residues 152 to 267 (SRRRRSRSRS…HRSASPERMD (116 aa)). 4 tandem repeats follow at residues 182-189 (RRSRSASP), 190-197 (RRSRSVSL), 198-205 (RRSRSASL), and 206-213 (RRSRSGSI). The tract at residues 182–255 (RRSRSASPRR…SPKRSRSPSG (74 aa)) is 6 X 8 AA repeats of R-R-S-R-S-X-S-X. 3 positions are modified to phosphoserine: Ser192, Ser194, and Ser196. Ser210, Ser212, Ser221, Ser223, and Ser225 each carry phosphoserine. Positions 223–251 (SRSRSRSRSISRPRSSRSKSRSPSPKRSR) are enriched in basic residues. Residues 240-247 (SKSRSPSP) form a 5; approximate repeat. One copy of the 6; approximate repeat lies at 248 to 255 (KRSRSPSG). Residues Ser260 and Ser262 each carry the phosphoserine modification.

It belongs to the splicing factor SR family. Found in large molecular weight complexes containing CCNL1 and the p110 isoforms of either CDC2L1 or CDC2L2. Interacts with CCNL2 and CPSF6. Interacts with NXF1. Interacts with YTHDC1. In terms of processing, extensively phosphorylated on serine residues in the RS domain.

Its subcellular location is the nucleus. It localises to the cytoplasm. In terms of biological role, required for pre-mRNA splicing. Represses the splicing of MAPT/Tau exon 10. May function as export adapter involved in mRNA nuclear export such as of histone H2A. Binds mRNA which is thought to be transferred to the NXF1-NXT1 heterodimer for export (TAP/NXF1 pathway); enhances NXF1-NXT1 RNA-binding activity. RNA-binding is semi-sequence specific. This Mus musculus (Mouse) protein is Serine/arginine-rich splicing factor 7 (Srsf7).